Reading from the N-terminus, the 261-residue chain is Undecaprenyl-diphosphatase (261 aa).

8 helical membrane-spanning segments follow: residues 16 to 36 (TEFL…LFGF), 40 to 60 (GLVF…VYFW), 82 to 102 (FWFL…LEDI), 107 to 127 (LRAP…LYLA), 140 to 160 (IRFG…IPGV), 183 to 203 (FSFL…MLKM), 211 to 231 (SFVL…WFLI), and 239 to 259 (FNIF…IALL).

It belongs to the UppP family.

It localises to the cell membrane. The catalysed reaction is di-trans,octa-cis-undecaprenyl diphosphate + H2O = di-trans,octa-cis-undecaprenyl phosphate + phosphate + H(+). Functionally, catalyzes the dephosphorylation of undecaprenyl diphosphate (UPP). Confers resistance to bacitracin. The protein is Undecaprenyl-diphosphatase of Desulforudis audaxviator (strain MP104C).